Reading from the N-terminus, the 208-residue chain is Small ribosomal subunit protein uS5 (208 aa).

Positions 1–15 (MTDSNNQSPNKKTSG) are enriched in polar residues. Residues 1 to 54 (MTDSNNQSPNKKTSGSSSAPPAADGRQENRRSRGEKRGGRRDRRGQERDSEWQE) form a disordered region. 2 stretches are compositionally biased toward basic and acidic residues: residues 25–37 (GRQE…GEKR) and 44–54 (RGQERDSEWQE). The region spanning 52–115 (WQERVVQIRR…ADGKKHLVRV (64 aa)) is the S5 DRBM domain.

The protein belongs to the universal ribosomal protein uS5 family. Part of the 30S ribosomal subunit. Contacts proteins S4 and S8.

In terms of biological role, with S4 and S12 plays an important role in translational accuracy. Functionally, located at the back of the 30S subunit body where it stabilizes the conformation of the head with respect to the body. This chain is Small ribosomal subunit protein uS5, found in Prochlorococcus marinus (strain NATL2A).